The following is a 294-amino-acid chain: Probable 2-(5''-triphosphoribosyl)-3'-dephosphocoenzyme-A synthase (294 aa).

It belongs to the CitG/MdcB family.

The enzyme catalyses 3'-dephospho-CoA + ATP = 2'-(5''-triphospho-alpha-D-ribosyl)-3'-dephospho-CoA + adenine. This Streptococcus equi subsp. equi (strain 4047) protein is Probable 2-(5''-triphosphoribosyl)-3'-dephosphocoenzyme-A synthase.